Consider the following 376-residue polypeptide: Growth/differentiation factor 8 (376 aa).

A signal peptide spans 1-22 (MHLSQIVLYLSLLIALGPVVLS). Residues 23-267 (DQEAHQQPSV…ISEGPRRARR (245 aa)) constitute a propeptide that is removed on maturation. Disulfide bonds link Cys273–Cys283, Cys282–Cys341, Cys310–Cys373, and Cys314–Cys375.

The protein belongs to the TGF-beta family. In terms of assembly, homodimer; disulfide-linked. As to expression, highly expressed in muscle. Also expressed in other tissues such as eye, gill, ovary, gut and brain. Very low level detected in testis. Not expressed in liver, kidney, stomach or heart.

It is found in the secreted. Its function is as follows. Acts specifically as a negative regulator of skeletal muscle growth. In Oreochromis mossambicus (Mozambique tilapia), this protein is Growth/differentiation factor 8.